Reading from the N-terminus, the 88-residue chain is Small ribosomal subunit protein uS19 (88 aa).

Belongs to the universal ribosomal protein uS19 family.

Its function is as follows. Protein S19 forms a complex with S13 that binds strongly to the 16S ribosomal RNA. In Chlamydia felis (strain Fe/C-56) (Chlamydophila felis), this protein is Small ribosomal subunit protein uS19.